Reading from the N-terminus, the 157-residue chain is Cyclic pyranopterin monophosphate synthase (157 aa).

Substrate is bound by residues 74–76 (MCH) and 110–111 (ME). Residue Asp125 is part of the active site.

This sequence belongs to the MoaC family. As to quaternary structure, homohexamer; trimer of dimers.

It carries out the reaction (8S)-3',8-cyclo-7,8-dihydroguanosine 5'-triphosphate = cyclic pyranopterin phosphate + diphosphate. Its pathway is cofactor biosynthesis; molybdopterin biosynthesis. Catalyzes the conversion of (8S)-3',8-cyclo-7,8-dihydroguanosine 5'-triphosphate to cyclic pyranopterin monophosphate (cPMP). This Peptoclostridium acidaminophilum (Eubacterium acidaminophilum) protein is Cyclic pyranopterin monophosphate synthase.